Here is a 346-residue protein sequence, read N- to C-terminus: Methylthioribose-1-phosphate isomerase (346 aa).

Substrate contacts are provided by residues 46–48, Arg-89, and Gln-196; that span reads RGA. Asp-237 serves as the catalytic Proton donor. 247 to 248 serves as a coordination point for substrate; sequence NK.

Belongs to the eIF-2B alpha/beta/delta subunits family. MtnA subfamily.

It carries out the reaction 5-(methylsulfanyl)-alpha-D-ribose 1-phosphate = 5-(methylsulfanyl)-D-ribulose 1-phosphate. Its pathway is amino-acid biosynthesis; L-methionine biosynthesis via salvage pathway; L-methionine from S-methyl-5-thio-alpha-D-ribose 1-phosphate: step 1/6. Catalyzes the interconversion of methylthioribose-1-phosphate (MTR-1-P) into methylthioribulose-1-phosphate (MTRu-1-P). The chain is Methylthioribose-1-phosphate isomerase from Trichlorobacter lovleyi (strain ATCC BAA-1151 / DSM 17278 / SZ) (Geobacter lovleyi).